Consider the following 446-residue polypeptide: MKFSTQKPKKTLHMVSLGCTKNLVDSEVMLGRLSDYQLTDDAQNADVIIVNTCGFIDSAKQESINTILSLHEDRKNESVLVMAGCLSERYKEELQKELPEIDVFTGVGDYDRIDELVNEKRSNFTSEVFLASETNERVITGSSYHAYVKLSEGCNQACSFCAIPSFKGKLHSRTLQSLVKEVKALVAKGYVDFSFVSQDSSSFLRDLDIKNGLELLVEEVEKIEGIKTARILYLYPSTTTLSLIDKIADSKVFVNYFDMPLQHITPSMLKIMKRGKGVEQLNELMNHMKSKPNSFVRTTFIAGHPGETEDDFEALCNYVENFKFDRANVFSYSDEEGTTAETRTDKVEQELIDERAEVLGEIISQTTQESLESEVGKTFEVYIDGESEEHEYLLSARKTIWAPSIDGEIYINDNELSEGEQIKFGQIYTVKITELVGDKLLATVIK.

The MTTase N-terminal domain maps to 10–122 (KTLHMVSLGC…IDELVNEKRS (113 aa)). [4Fe-4S] cluster-binding residues include Cys19, Cys53, Cys85, Cys154, Cys158, and Cys161. One can recognise a Radical SAM core domain in the interval 140–369 (TGSSYHAYVK…GEIISQTTQE (230 aa)). The TRAM domain occupies 372–446 (ESEVGKTFEV…GDKLLATVIK (75 aa)).

This sequence belongs to the methylthiotransferase family. RimO subfamily. The cofactor is [4Fe-4S] cluster.

The protein localises to the cytoplasm. It catalyses the reaction L-aspartate(89)-[ribosomal protein uS12]-hydrogen + (sulfur carrier)-SH + AH2 + 2 S-adenosyl-L-methionine = 3-methylsulfanyl-L-aspartate(89)-[ribosomal protein uS12]-hydrogen + (sulfur carrier)-H + 5'-deoxyadenosine + L-methionine + A + S-adenosyl-L-homocysteine + 2 H(+). In terms of biological role, catalyzes the methylthiolation of an aspartic acid residue of ribosomal protein uS12. In Aliarcobacter butzleri (strain RM4018) (Arcobacter butzleri), this protein is Ribosomal protein uS12 methylthiotransferase RimO.